The sequence spans 457 residues: Bifunctional protein GlmU (457 aa).

The interval 1 to 230 (MSKRYAVVLA…FEESLGVNDR (230 aa)) is pyrophosphorylase. UDP-N-acetyl-alpha-D-glucosamine contacts are provided by residues 9–12 (LAAG), K23, Q73, and 78–79 (GT). D103 provides a ligand contact to Mg(2+). Positions 140, 155, 170, and 228 each coordinate UDP-N-acetyl-alpha-D-glucosamine. N228 is a Mg(2+) binding site. The segment at 231–251 (IALAEASKLMQRRINENHMRN) is linker. An N-acetyltransferase region spans residues 252-457 (GVTLVNPEST…GYAKHLNHSK (206 aa)). Residues R333 and K351 each contribute to the UDP-N-acetyl-alpha-D-glucosamine site. The active-site Proton acceptor is H363. Y366 and N377 together coordinate UDP-N-acetyl-alpha-D-glucosamine. Residues 386-387 (NY), A423, and R440 each bind acetyl-CoA.

It in the N-terminal section; belongs to the N-acetylglucosamine-1-phosphate uridyltransferase family. The protein in the C-terminal section; belongs to the transferase hexapeptide repeat family. In terms of assembly, homotrimer. It depends on Mg(2+) as a cofactor.

The protein resides in the cytoplasm. The catalysed reaction is alpha-D-glucosamine 1-phosphate + acetyl-CoA = N-acetyl-alpha-D-glucosamine 1-phosphate + CoA + H(+). The enzyme catalyses N-acetyl-alpha-D-glucosamine 1-phosphate + UTP + H(+) = UDP-N-acetyl-alpha-D-glucosamine + diphosphate. It participates in nucleotide-sugar biosynthesis; UDP-N-acetyl-alpha-D-glucosamine biosynthesis; N-acetyl-alpha-D-glucosamine 1-phosphate from alpha-D-glucosamine 6-phosphate (route II): step 2/2. Its pathway is nucleotide-sugar biosynthesis; UDP-N-acetyl-alpha-D-glucosamine biosynthesis; UDP-N-acetyl-alpha-D-glucosamine from N-acetyl-alpha-D-glucosamine 1-phosphate: step 1/1. It functions in the pathway bacterial outer membrane biogenesis; LPS lipid A biosynthesis. Functionally, catalyzes the last two sequential reactions in the de novo biosynthetic pathway for UDP-N-acetylglucosamine (UDP-GlcNAc). The C-terminal domain catalyzes the transfer of acetyl group from acetyl coenzyme A to glucosamine-1-phosphate (GlcN-1-P) to produce N-acetylglucosamine-1-phosphate (GlcNAc-1-P), which is converted into UDP-GlcNAc by the transfer of uridine 5-monophosphate (from uridine 5-triphosphate), a reaction catalyzed by the N-terminal domain. The sequence is that of Bifunctional protein GlmU from Listeria monocytogenes serovar 1/2a (strain ATCC BAA-679 / EGD-e).